Consider the following 366-residue polypeptide: Chaperone protein DnaJ (366 aa).

The 65-residue stretch at 5 to 69 (DYYEVLGVSK…QKRAQYDQFG (65 aa)) folds into the J domain. The CR-type zinc finger occupies 128 to 210 (GKELNVEIPV…CHGTGKVRKR (83 aa)). Residues cysteine 141, cysteine 144, cysteine 158, cysteine 161, cysteine 184, cysteine 187, cysteine 198, and cysteine 201 each contribute to the Zn(2+) site. 4 CXXCXGXG motif repeats span residues 141-148 (CDTCHGSG), 158-165 (CKYCSGTG), 184-191 (CRHCSGTG), and 198-205 (CTTCHGTG).

It belongs to the DnaJ family. Homodimer. The cofactor is Zn(2+).

Its subcellular location is the cytoplasm. Functionally, participates actively in the response to hyperosmotic and heat shock by preventing the aggregation of stress-denatured proteins and by disaggregating proteins, also in an autonomous, DnaK-independent fashion. Unfolded proteins bind initially to DnaJ; upon interaction with the DnaJ-bound protein, DnaK hydrolyzes its bound ATP, resulting in the formation of a stable complex. GrpE releases ADP from DnaK; ATP binding to DnaK triggers the release of the substrate protein, thus completing the reaction cycle. Several rounds of ATP-dependent interactions between DnaJ, DnaK and GrpE are required for fully efficient folding. Also involved, together with DnaK and GrpE, in the DNA replication of plasmids through activation of initiation proteins. In Bacillus cytotoxicus (strain DSM 22905 / CIP 110041 / 391-98 / NVH 391-98), this protein is Chaperone protein DnaJ.